The following is a 693-amino-acid chain: MRNAVDIKTLADVKEKVKHEKRTHCLVLNKYRVNELLKNKDAKIWFLNIFRFPSVLKFREYQGCLVETGPYDGEVLRFIHSYVESLGGGEVSGQVSGQVNDQLSCQMTSHANDSQAGTPLADAPLADCRLIPLNARFNRALHELMQREGKGVLEGVDMRPEEGDERDVAAEGGGVEDVAQQGAAHQDAPPALEKLLRVIKAEGIQIRTIQLQFGYDNMNTSQVLRKVFPSESEVIHKYEMIGHIAHLNFCERFENHKKVIAEIILDKNKSIRTVINKKDSLKNVHRTFTIELLAGEENYLTMLRENDIKVKLNYELMYWNSKLKKERDRIYSLVENNSIVVDVFAGVGIFSLHLSKKNCLCFSNDINLHAYNFMNVNIKLNKRRSILTYNLDARAFVCMLLRLGIFSRDTSTLAMQLGEQNWRNVSLDFVNSAGRDVVDAGKGKKRAADCKVDCKEDCKEDCKEDCKEDCKEDCKEDCKEDCKEDCKEDCEVKDCKAGDSHQSNSHQSNPHESNPHESAPRDKKKKLAHGDANGPLGERPPGVAATHGGEEVPPEPTNNEAEQKAEDAPTNETHQVDINLGIYGDVHVLMNLPQTALDFLDVFRELLHMYSAGQKDPQGRCRRDQMRNVFIHCYFFSKPELFYEHAERNIRMQLGGIPREMKITEIRKVSPSKLMYVVEFNLKDVFSQGDQLG.

Residues Arg-327, 365 to 366, and 392 to 393 contribute to the S-adenosyl-L-methionine site; these read DI and DA. Residues 497-572 are disordered; that stretch reads AGDSHQSNSH…QKAEDAPTNE (76 aa). Positions 500 to 512 are enriched in low complexity; the sequence is SHQSNSHQSNPHE. Asn-591 contacts S-adenosyl-L-methionine.

The protein belongs to the class I-like SAM-binding methyltransferase superfamily. TRM5/TYW2 family. In terms of assembly, monomer.

The protein localises to the mitochondrion matrix. It localises to the nucleus. Its subcellular location is the cytoplasm. It catalyses the reaction guanosine(37) in tRNA + S-adenosyl-L-methionine = N(1)-methylguanosine(37) in tRNA + S-adenosyl-L-homocysteine + H(+). Its function is as follows. Specifically methylates the N1 position of guanosine-37 in various cytoplasmic and mitochondrial tRNAs. Methylation is not dependent on the nature of the nucleoside 5' of the target nucleoside. This is the first step in the biosynthesis of wybutosine (yW), a modified base adjacent to the anticodon of tRNAs and required for accurate decoding. The chain is tRNA (guanine(37)-N(1))-methyltransferase from Plasmodium vivax (strain Salvador I).